The primary structure comprises 331 residues: Reticulocalbin-1 (331 aa).

The N-terminal stretch at 1 to 29 is a signal peptide; the sequence is MARGGRGRRLGLALGLLLALVLAPRVLRA. N-linked (GlcNAc...) asparagine glycosylation is present at asparagine 53. Phosphoserine is present on serine 55. The residue at position 76 (threonine 76) is a Phosphothreonine. EF-hand domains are found at residues 79–114, 115–150, 166–201, 203–238, 244–279, and 280–315; these read ESKERLGKIVDRIDNDGDGFVTTEELKTWIKRVQKR, YIFDNVAKVWKDYDRDKDDKISWEEYKQATYGYYLG, KMLPRDERRFKAADLNGDLTATREEFTAFLHPEEFE, MKEIVVLETLEDIDKNGDGFVDQDEYIADMFSHEEN, WVLSEREQFNEFRDLNKDGKLDKDEIRHWILPQDYD, and HAQAEARHLVYESDKNKDEKLTKEEILENWNMFVGS. Serine 80 is subject to Phosphoserine; by FAM20C. 28 residues coordinate Ca(2+): aspartate 92, aspartate 94, aspartate 96, glutamate 103, aspartate 128, aspartate 130, aspartate 132, lysine 134, glutamate 139, aspartate 179, asparagine 181, aspartate 183, threonine 185, glutamate 190, aspartate 216, asparagine 218, aspartate 220, glutamate 227, aspartate 257, asparagine 259, aspartate 261, lysine 263, glutamate 268, aspartate 293, asparagine 295, aspartate 297, lysine 299, and glutamate 304. The Prevents secretion from ER motif lies at 328-331; sequence HDEL.

It belongs to the CREC family. Post-translationally, O-glycosylated. O-mannosylated by POMT1 and POMT2 and elongated by POMGNT1.

It localises to the endoplasmic reticulum lumen. In terms of biological role, may regulate calcium-dependent activities in the endoplasmic reticulum lumen or post-ER compartment. The protein is Reticulocalbin-1 (RCN1) of Homo sapiens (Human).